Reading from the N-terminus, the 285-residue chain is VQ motif-containing protein 20 (285 aa).

Positions 1–10 are enriched in basic and acidic residues; the sequence is MSSTYKDNHP. The disordered stretch occupies residues 1–68; sequence MSSTYKDNHP…PSPSSFSSAA (68 aa). Residues 11 to 23 show a composition bias toward basic residues; the sequence is YHHHPHHHHHHPK. Positions 91-100 match the VQ motif; sequence FMALVQKLTG. The tract at residues 195 to 218 is disordered; it reads YSAVAIPPQPPPHPPPPPPPPSMY. The span at 201–216 shows a compositional bias: pro residues; it reads PPQPPPHPPPPPPPPS.

Its subcellular location is the nucleus. In terms of biological role, may function as negative regulator of plant defense. The sequence is that of VQ motif-containing protein 20 from Arabidopsis thaliana (Mouse-ear cress).